Here is a 565-residue protein sequence, read N- to C-terminus: Nephronectin (565 aa).

An N-terminal signal peptide occupies residues 1 to 19 (MDFLLALVLVSSLYLQAAA). Residues 52–87 (SWGQCQPVCQPRCKHGECIGPNKCKCHPGYAGKTCN) form the EGF-like 1 domain. 6 cysteine pairs are disulfide-bonded: cysteine 56–cysteine 69, cysteine 60–cysteine 75, cysteine 77–cysteine 86, cysteine 93–cysteine 104, cysteine 100–cysteine 113, and cysteine 115–cysteine 127. The region spanning 89-128 (DLNECGLKPRPCKHRCMNTYGSYKCYCLNGYMLMPDGSCS) is the EGF-like 2; calcium-binding domain. The EGF-like 3 domain occupies 132–168 (TCSMANCQYGCDVVKGQIRCQCPSPGLQLAPDGRTCV). Residues 169-213 (DVDECATGRASCPRFRQCVNTFGSYICKCHKGFNLMYIGGKYQCH) form the EGF-like 4; calcium-binding domain. 6 disulfides stabilise this stretch: cysteine 173–cysteine 186, cysteine 180–cysteine 195, cysteine 197–cysteine 212, cysteine 218–cysteine 231, cysteine 225–cysteine 240, and cysteine 242–cysteine 253. One can recognise an EGF-like 5; calcium-binding domain in the interval 214–254 (DIDECSLGQYQCSSFARCYNIHGSYKCKCKEGYQGDGLTCV). The segment at 301-373 (YIPPIITNRP…PPGGITVDNR (73 aa)) is disordered. Positions 304–316 (PIITNRPTSKPTT) are enriched in low complexity. Pro residues predominate over residues 317-349 (RPTPKPTPIPTPPPPPPLPTELRTPLPPTTPER). The Integrin interaction signature appears at 382–384 (RGD). The 144-residue stretch at 420 to 563 (HSCNFDHGLC…VSLKKGHCSE (144 aa)) folds into the MAM domain.

This sequence belongs to the nephronectin family. As to quaternary structure, homodimer and homotrimer.

The protein localises to the secreted. Its subcellular location is the extracellular space. It localises to the extracellular matrix. In terms of biological role, functional ligand of integrin alpha-8/beta-1 in kidney development. Regulates the expression of GDNF with integrin alpha-8/beta-1 which is essential for kidney development. May also play a role in the development and function of various tissues, regulating cell adhesion, spreading and survival through the binding of several integrins. The polypeptide is Nephronectin (NPNT) (Pongo abelii (Sumatran orangutan)).